Here is a 189-residue protein sequence, read N- to C-terminus: Peptidyl-tRNA hydrolase (189 aa).

Residue Tyr14 coordinates tRNA. His19 serves as the catalytic Proton acceptor. Residues Tyr64, Asn66, and Asn112 each coordinate tRNA.

Belongs to the PTH family. Monomer.

The protein localises to the cytoplasm. The catalysed reaction is an N-acyl-L-alpha-aminoacyl-tRNA + H2O = an N-acyl-L-amino acid + a tRNA + H(+). Hydrolyzes ribosome-free peptidyl-tRNAs (with 1 or more amino acids incorporated), which drop off the ribosome during protein synthesis, or as a result of ribosome stalling. Its function is as follows. Catalyzes the release of premature peptidyl moieties from peptidyl-tRNA molecules trapped in stalled 50S ribosomal subunits, and thus maintains levels of free tRNAs and 50S ribosomes. This is Peptidyl-tRNA hydrolase from Brevibacillus brevis (strain 47 / JCM 6285 / NBRC 100599).